The following is a 375-amino-acid chain: Queuine tRNA-ribosyltransferase (375 aa).

The active-site Proton acceptor is Asp-94. Substrate contacts are provided by residues 94–98 (DSGGF), Asp-148, Gln-191, and Gly-218. The tract at residues 249–255 (GVGSPDD) is RNA binding. Asp-268 serves as the catalytic Nucleophile. The interval 273 to 277 (TRIAR) is RNA binding; important for wobble base 34 recognition. Positions 306, 308, 311, and 337 each coordinate Zn(2+).

Belongs to the queuine tRNA-ribosyltransferase family. In terms of assembly, homodimer. Within each dimer, one monomer is responsible for RNA recognition and catalysis, while the other monomer binds to the replacement base PreQ1. It depends on Zn(2+) as a cofactor.

It catalyses the reaction 7-aminomethyl-7-carbaguanine + guanosine(34) in tRNA = 7-aminomethyl-7-carbaguanosine(34) in tRNA + guanine. It functions in the pathway tRNA modification; tRNA-queuosine biosynthesis. Its function is as follows. Catalyzes the base-exchange of a guanine (G) residue with the queuine precursor 7-aminomethyl-7-deazaguanine (PreQ1) at position 34 (anticodon wobble position) in tRNAs with GU(N) anticodons (tRNA-Asp, -Asn, -His and -Tyr). Catalysis occurs through a double-displacement mechanism. The nucleophile active site attacks the C1' of nucleotide 34 to detach the guanine base from the RNA, forming a covalent enzyme-RNA intermediate. The proton acceptor active site deprotonates the incoming PreQ1, allowing a nucleophilic attack on the C1' of the ribose to form the product. After dissociation, two additional enzymatic reactions on the tRNA convert PreQ1 to queuine (Q), resulting in the hypermodified nucleoside queuosine (7-(((4,5-cis-dihydroxy-2-cyclopenten-1-yl)amino)methyl)-7-deazaguanosine). In Thermoanaerobacter sp. (strain X514), this protein is Queuine tRNA-ribosyltransferase.